Reading from the N-terminus, the 50-residue chain is Large ribosomal subunit protein bL32c (50 aa).

It belongs to the bacterial ribosomal protein bL32 family.

It localises to the plastid. The protein resides in the chloroplast. The sequence is that of Large ribosomal subunit protein bL32c from Lotus japonicus (Lotus corniculatus var. japonicus).